The following is a 149-amino-acid chain: Glutamyl-tRNA(Gln) amidotransferase subunit C, mitochondrial (149 aa).

Belongs to the GatC family. Subunit of the heterotrimeric GatCAB amidotransferase (AdT) complex, composed of A, B and C subunits.

The protein localises to the mitochondrion. The catalysed reaction is L-glutamyl-tRNA(Gln) + L-glutamine + ATP + H2O = L-glutaminyl-tRNA(Gln) + L-glutamate + ADP + phosphate + H(+). Its function is as follows. Allows the formation of correctly charged Gln-tRNA(Gln) through the transamidation of misacylated Glu-tRNA(Gln) in the mitochondria. The reaction takes place in the presence of glutamine and ATP through an activated gamma-phospho-Glu-tRNA(Gln). This chain is Glutamyl-tRNA(Gln) amidotransferase subunit C, mitochondrial, found in Trichoplax adhaerens (Trichoplax reptans).